A 118-amino-acid polypeptide reads, in one-letter code: Large ribosomal subunit protein uL18 (118 aa).

Belongs to the universal ribosomal protein uL18 family. Part of the 50S ribosomal subunit; part of the 5S rRNA/L5/L18/L25 subcomplex. Contacts the 5S and 23S rRNAs.

Its function is as follows. This is one of the proteins that bind and probably mediate the attachment of the 5S RNA into the large ribosomal subunit, where it forms part of the central protuberance. The polypeptide is Large ribosomal subunit protein uL18 (Dechloromonas aromatica (strain RCB)).